The sequence spans 1087 residues: Exportin-7 (1087 aa).

Ala-2 carries the N-acetylalanine modification. In terms of domain architecture, Importin N-terminal spans 30–96; that stretch reads AEKALVEFTN…RNYVLNYLAT (67 aa). Phosphoserine is present on Ser-570.

The protein belongs to the exportin family. As to quaternary structure, binds to nucleoporins. Found in a complex with XPO7, EIF4A1, ARHGAP1, VPS26A, VPS29, VPS35 and SFN. Interacts with ARHGAP1 and SFN. Interacts with Ran and cargo proteins in a GTP-dependent manner.

It is found in the cytoplasm. It localises to the nucleus. Its subcellular location is the nuclear pore complex. In terms of biological role, mediates the nuclear export of proteins (cargos) with broad substrate specificity. In the nucleus binds cooperatively to its cargo and to the GTPase Ran in its active GTP-bound form. Docking of this trimeric complex to the nuclear pore complex (NPC) is mediated through binding to nucleoporins. Upon transit of a nuclear export complex into the cytoplasm, disassembling of the complex and hydrolysis of Ran-GTP to Ran-GDP (induced by RANBP1 and RANGAP1, respectively) cause release of the cargo from the export receptor. XPO7 then return to the nuclear compartment and mediate another round of transport. The directionality of nuclear export is thought to be conferred by an asymmetric distribution of the GTP- and GDP-bound forms of Ran between the cytoplasm and nucleus. This Pongo abelii (Sumatran orangutan) protein is Exportin-7 (XPO7).